Reading from the N-terminus, the 558-residue chain is Formate--tetrahydrofolate ligase (558 aa).

66 to 73 (TPAGEGKT) serves as a coordination point for ATP.

The protein belongs to the formate--tetrahydrofolate ligase family.

The catalysed reaction is (6S)-5,6,7,8-tetrahydrofolate + formate + ATP = (6R)-10-formyltetrahydrofolate + ADP + phosphate. It functions in the pathway one-carbon metabolism; tetrahydrofolate interconversion. The polypeptide is Formate--tetrahydrofolate ligase (Neisseria meningitidis serogroup B (strain ATCC BAA-335 / MC58)).